The sequence spans 496 residues: MVEADHPGKLFIGGLNRETNEKMLKAVFGKHGPISEVLLIKDRTSKSRGFAFITFENPADAKNAAKDMNGKSLHGKAIKVEQAKKPSFQSGGRRRPPASSRNRSPSGSLRSARGSRGGTRGWLPSHEGHLDDGGYTPDLKMSYSRGLIPVKRGPSSRSGGPPPKKSAPSAVARSNSWMGSQGPMSQRRENYGVPPRRATISSWRNDRMSTRHDGYATNDGNHPSCQETRDYAPPSRGYAYRDNGHSNRDEHSSRGYRNHRSSRETRDYAPPSRGHAYRDYGHSRRDESYSRGYRNRRSSRETREYAPPSRGHGYRDYGHSRRHESYSRGYRNHPSSRETRDYAPPHRDYAYRDYGHSSWDEHSSRGYSYHDGYGEALGRDHSEHLSGSSYRDALQRYGTSHGAPPARGPRMSYGGSTCHAYSNTRDRYGRSWESYSSCGDFHYCDREHVCRKDQRNPPSLGRVLPDPREACGSSSYVASIVDGGESRSEKGDSSRY.

The RRM domain maps to 8 to 85 (GKLFIGGLNR…KAIKVEQAKK (78 aa)). Disordered regions lie at residues 78–349 (IKVE…HRDY) and 452–496 (KDQR…SSRY). 2 stretches are compositionally biased toward low complexity: residues 97-114 (PASSRNRSPSGSLRSARG) and 149-159 (PVKRGPSSRSG). Polar residues predominate over residues 175–184 (NSWMGSQGPM). 6 stretches are compositionally biased toward basic and acidic residues: residues 204–214 (RNDRMSTRHDG), 242–253 (DNGHSNRDEHSS), 276–289 (AYRDYGHSRRDESY), 313–326 (GYRDYGHSRRHESY), 335–349 (SSRETRDYAPPHRDY), and 484–496 (GESRSEKGDSSRY).

Interacts with splicing factor proteins SFRS3/SRP20, TRA2B/SFRS10, KHDRBS1/SAM68 and KHDRBS3. In terms of tissue distribution, testis-specific.

It is found in the nucleus. In terms of biological role, RNA-binding protein involved in pre-mRNA splicing. Required for sperm development. Acts additively with TRA2B to promote exon 7 inclusion of the survival motor neuron SMN. Binds non-specifically to mRNAs. The sequence is that of RNA-binding motif protein, Y chromosome, family 1 member A1 (RBMY1A1) from Homo sapiens (Human).